A 325-amino-acid chain; its full sequence is UPF0285 protein MA_3856 (325 aa).

Belongs to the UPF0285 family.

In Methanosarcina acetivorans (strain ATCC 35395 / DSM 2834 / JCM 12185 / C2A), this protein is UPF0285 protein MA_3856.